The following is a 373-amino-acid chain: G protein-coupled receptor 137Ba (373 aa).

The Lumenal portion of the chain corresponds to 1–15; the sequence is MQKDSLPTLSPAVPP. A helical transmembrane segment spans residues 16 to 36; sequence YVMLGLTVAYTIFYCLLFVFV. The Cytoplasmic portion of the chain corresponds to 37-55; that stretch reads YVQLWLVLRYRHKRFSYQT. A helical transmembrane segment spans residues 56 to 76; sequence VFLFLCLLWAALRALLFSFYF. The Lumenal segment spans residues 77 to 84; it reads KNCVTANT. A helical membrane pass occupies residues 85–105; that stretch reads LGPFCFWLLYCFPVCLQFFTL. The Cytoplasmic portion of the chain corresponds to 106-135; the sequence is SLMNLYFAQVIFKAKSKYSPELQKYRLPLY. The helical transmembrane segment at 136–156 threads the bilayer; the sequence is LLFLSISLLFLLVNLTCALLV. The Lumenal portion of the chain corresponds to 157 to 176; that stretch reads KINRANTETVVLVRVTVNDS. The chain crosses the membrane as a helical span at residues 177-197; the sequence is LFVLCAVSLSLCLYRIAKMSL. Residues 198–213 are Cytoplasmic-facing; sequence ANIYLEAKGTSVCQVT. Residues 214–234 traverse the membrane as a helical segment; the sequence is LIGVTVVLLYSSRACYNLVVL. Over 235 to 268 the chain is Lumenal; it reads ALTKIKSINSFDYDWYNVSDQADLKSTLGDAGYV. Residues 269–289 traverse the membrane as a helical segment; that stretch reads VFGVILFVWELLPTSLVVYFF. Over 290–373 the chain is Cytoplasmic; sequence RVRKPTLDRS…HLAPEELNPY (84 aa).

This sequence belongs to the GPR137 family.

The protein resides in the lysosome membrane. Lysosomal integral membrane protein that regulates the localization and activity of mTORC1, a signaling complex promoting cell growth in response to growth factors, energy levels, and amino acids. Interacts with Rag GTPases and increases the lysosomial localization and activity of Rag GTPases and thereby regulates mTORC1 translocation and activity in lysosome. Also acts as a negative regulator of osteoclast activity. May be involved in interleukin-4-induced M2 macrophage polarization. In terms of biological role, also acts as a negative regulator of osteoclast activity. May be involved in interleukin-4-induced M2 macrophage polarization. The polypeptide is G protein-coupled receptor 137Ba (Danio rerio (Zebrafish)).